Here is a 44-residue protein sequence, read N- to C-terminus: Phosphatase RapE inhibitor (44 aa).

2 consecutive propeptides follow at residues Met-1–Ala-30 and Leu-36–Val-44.

This sequence belongs to the Phr family. In terms of processing, contains a predicted signal peptide cleavage site in the N-terminal region, however the propeptide is probably only subject to processing events at the ends of the mature peptide.

The protein resides in the secreted. The protein localises to the cytoplasm. Functionally, signaling molecule involved in the regulation of sporulation. Secreted during production, but the mature peptide acts intracellularly, indicating that it needs to be imported into the cell to function. Inhibitor of the RapE phosphatase activity. Does not inhibit the phosphatase activity of RapA and RapB. Probably plays a dispensable role in the overall context of sporulation initiation. In Bacillus subtilis (strain 168), this protein is Phosphatase RapE inhibitor (phrE).